A 434-amino-acid chain; its full sequence is MPVSARAGIVVTGTEVLTGRVQDANGPWIADRLLELGVELAHITICGDRPHDIEAQLRFLADQGVDLIVTSGGLGPTADDMTVEVVARFCGRELVLDAEVEEKIANILKKLMARNPAFQSALDPGTFESLRAANRKQAMVPAGAQVLDPVGTAPGVVVPGKPAVIVLPGPPRELQPMWHTAIQTPAAQQAIAGRTVYRQEMLRMFGLPESGLAETLREAEAAVPGFGQLEITTCLRRGEIEMVTRYEPTAATAYAQLTKLLRDKHGDQLYSEDGSRVDDLVARLLAGRRIATAESCTAGLLAARLTDRPGSSDYVAGGVVAYSNEAKAELLGVDPALIETHGAVSEPVAQAMAAGARQRFAADTAVAITGIAGPGGGTEEKPVGTVCFSVQVGPPGATARSDTRTLRLPGNRLDIRERSTTVAMHLLRRLLTDA.

The protein belongs to the CinA family.

The sequence is that of CinA-like protein from Mycobacterium avium (strain 104).